The chain runs to 274 residues: Small nuclear ribonucleoprotein-associated protein B (274 aa).

The 81-residue stretch at 5 to 85 (PKSSKMLQYI…VVSMSVEAPP (81 aa)) folds into the Sm domain. The segment at 148-274 (PGGGVPPPMG…PMGRGGFQRK (127 aa)) is disordered. The stretch at 162–171 (PPQGFPPGGP) is repeat 1. The 6 X 10 AA repeats of P-P-Q-G-F-P-P-G-G-P stretch occupies residues 162 to 265 (PPQGFPPGGP…PPQGFPPGGP (104 aa)). Low complexity predominate over residues 173-187 (PQGAFNNNPNNNNGG). 5 repeat units span residues 188-197 (PPQGFPPGGP), 204-213 (PPQGFPPGGP), 225-234 (PPQGFPPGGP), 241-250 (PPQGFPPGGP), and 256-265 (PPQGFPPGGP). Residues 216–226 (GPNLNNGNMPP) are compositionally biased toward low complexity. Residues 265–274 (PMGRGGFQRK) are compositionally biased toward gly residues.

Belongs to the snRNP SmB/SmN family.

It is found in the cytoplasm. The protein localises to the cytosol. Its subcellular location is the nucleus. Its function is as follows. Plays a role in pre-mRNA splicing as a core component of the spliceosomal U1, U2, U4 and U5 small nuclear ribonucleoproteins (snRNPs), the building blocks of the spliceosome. The polypeptide is Small nuclear ribonucleoprotein-associated protein B (snrpb) (Dictyostelium discoideum (Social amoeba)).